We begin with the raw amino-acid sequence, 329 residues long: Phenylalanine--tRNA ligase alpha subunit (329 aa).

Glu-254 lines the Mg(2+) pocket.

It belongs to the class-II aminoacyl-tRNA synthetase family. Phe-tRNA synthetase alpha subunit type 1 subfamily. As to quaternary structure, tetramer of two alpha and two beta subunits. The cofactor is Mg(2+).

The protein localises to the cytoplasm. The catalysed reaction is tRNA(Phe) + L-phenylalanine + ATP = L-phenylalanyl-tRNA(Phe) + AMP + diphosphate + H(+). In Haemophilus influenzae (strain 86-028NP), this protein is Phenylalanine--tRNA ligase alpha subunit.